Reading from the N-terminus, the 102-residue chain is Small ribosomal subunit protein uS10 (102 aa).

This sequence belongs to the universal ribosomal protein uS10 family. In terms of assembly, part of the 30S ribosomal subunit.

Functionally, involved in the binding of tRNA to the ribosomes. This Saccharolobus islandicus (strain M.16.4 / Kamchatka #3) (Sulfolobus islandicus) protein is Small ribosomal subunit protein uS10.